A 159-amino-acid polypeptide reads, in one-letter code: Large ribosomal subunit protein uL23m (159 aa).

It belongs to the universal ribosomal protein uL23 family. As to quaternary structure, component of the mitochondrial ribosome large subunit (39S) which comprises a 16S rRNA and about 50 distinct proteins.

It is found in the mitochondrion. The polypeptide is Large ribosomal subunit protein uL23m (mrpl-23) (Caenorhabditis elegans).